The primary structure comprises 166 residues: Dihydrofolate reductase (166 aa).

In terms of domain architecture, DHFR spans 6–164 (KISLIVAMDK…YDYYFHIYER (159 aa)). 10–12 (IVA) is a binding site for substrate. Residues 11–12 (VA) and 19–24 (IGKDND) contribute to the NADP(+) site. Substrate is bound at residue aspartate 32. Residue 48-51 (GRKN) coordinates NADP(+). Arginine 62 contributes to the substrate binding site. Residues 67-70 (LTRD) and 100-105 (FGGEQI) each bind NADP(+). Threonine 119 lines the substrate pocket.

This sequence belongs to the dihydrofolate reductase family.

It carries out the reaction (6S)-5,6,7,8-tetrahydrofolate + NADP(+) = 7,8-dihydrofolate + NADPH + H(+). It functions in the pathway cofactor biosynthesis; tetrahydrofolate biosynthesis; 5,6,7,8-tetrahydrofolate from 7,8-dihydrofolate: step 1/1. Key enzyme in folate metabolism. Catalyzes an essential reaction for de novo glycine and purine synthesis, and for DNA precursor synthesis. The chain is Dihydrofolate reductase (dfrD) from Staphylococcus haemolyticus.